The primary structure comprises 42 residues: Hemoglobin subunit beta-A (42 aa).

The Globin domain maps to 2–42 (EWTDAERSAILSLWGKIDTDELGPALLARLXLVXXXTQRYF).

This sequence belongs to the globin family. In terms of assembly, heterotetramer of two alpha chains and two beta chains. In terms of tissue distribution, red blood cells.

In terms of biological role, involved in oxygen transport from gills to the various peripheral tissues. This chain is Hemoglobin subunit beta-A, found in Catostomus clarkii (Desert sucker).